The following is a 610-amino-acid chain: UvrABC system protein C (610 aa).

A GIY-YIG domain is found at 16-94 (HQPGVYRMYN…IKQYLPKYNV (79 aa)). The UVR domain occupies 204–239 (NQVLELLVQKMEIASQQLKFEDAAKFRDQIQAIRRV).

This sequence belongs to the UvrC family. As to quaternary structure, interacts with UvrB in an incision complex.

Its subcellular location is the cytoplasm. Functionally, the UvrABC repair system catalyzes the recognition and processing of DNA lesions. UvrC both incises the 5' and 3' sides of the lesion. The N-terminal half is responsible for the 3' incision and the C-terminal half is responsible for the 5' incision. In Vibrio vulnificus (strain CMCP6), this protein is UvrABC system protein C.